The primary structure comprises 965 residues: Phosphoenolpyruvate carboxylase 1 (965 aa).

Serine 11 carries the post-translational modification Phosphoserine. Histidine 172 is an active-site residue. The D-glucose 6-phosphate site is built by tryptophan 283, arginine 450, and aspartate 597. The active site involves lysine 600. Arginine 635 contacts D-glucose 6-phosphate. Arginine 641 is an active-site residue. An L-aspartate-binding site is contributed by arginine 641. Threonine 665 provides a ligand contact to D-glucose 6-phosphate. An L-aspartate-binding site is contributed by glutamine 673. Residues arginine 753 and 767 to 769 (RAI) contribute to the D-glucose 6-phosphate site. L-aspartate is bound by residues lysine 829, arginine 888, and asparagine 963.

Belongs to the PEPCase type 1 family. As to quaternary structure, homotetramer. Mg(2+) is required as a cofactor. Expressed in roots and stems and at low levels in leaves. Preferentially expressed in the phloem and in root tips.

It is found in the cytoplasm. It carries out the reaction oxaloacetate + phosphate = phosphoenolpyruvate + hydrogencarbonate. Its activity is regulated as follows. Activated by the allosteric regulator glucose-6-phosphate. Inhibited by malate and aspartate. Up regulated by light-reversible phosphorylation. Functionally, through the carboxylation of phosphoenolpyruvate (PEP) it forms oxaloacetate, a four-carbon dicarboxylic acid source for the tricarboxylic acid cycle. May be involved in phloem loading with sucrose and in anions and cations uptake and amino acid biosynthesis in roots. This chain is Phosphoenolpyruvate carboxylase 1, found in Flaveria trinervia (Clustered yellowtops).